A 119-amino-acid chain; its full sequence is uncharacterized protein (119 aa).

A disulfide bridge links C9 with C12.

Belongs to the ArsC family.

This is an uncharacterized protein from Streptomyces viridochromogenes.